Consider the following 194-residue polypeptide: Erythropoietin (194 aa).

Residues 1-27 (MGARDCTPLLLLLLSFLLFPLGLPVLG) form the signal peptide. 2 cysteine pairs are disulfide-bonded: cysteine 34-cysteine 189 and cysteine 56-cysteine 60. N-linked (GlcNAc...) asparagine glycosylation is present at asparagine 51. Residues asparagine 65 and asparagine 110 are each glycosylated (N-linked (GlcNAc...) asparagine).

The protein belongs to the EPO/TPO family. In terms of tissue distribution, produced by kidney or liver of adult mammals and by liver of fetal or neonatal mammals.

It is found in the secreted. Hormone involved in the regulation of erythrocyte proliferation and differentiation and the maintenance of a physiological level of circulating erythrocyte mass. Binds to EPOR leading to EPOR dimerization and JAK2 activation thereby activating specific downstream effectors, including STAT1 and STAT3. The polypeptide is Erythropoietin (EPO) (Ovis aries (Sheep)).